The following is a 267-amino-acid chain: Small ribosomal subunit protein uS10m (267 aa).

Residues 1–10 constitute a mitochondrion transit peptide; sequence MLSRILGVRN.

Belongs to the universal ribosomal protein uS10 family. In terms of assembly, part of the mitochondrial small ribosomal subunit.

It is found in the mitochondrion. Its function is as follows. Involved in mitochondrial genome encoded proteins translation. Involved in the binding of tRNA to the ribosomes. This is Small ribosomal subunit protein uS10m (RSM10) from Debaryomyces hansenii (strain ATCC 36239 / CBS 767 / BCRC 21394 / JCM 1990 / NBRC 0083 / IGC 2968) (Yeast).